The primary structure comprises 260 residues: Late transcription factor 1 (260 aa).

Belongs to the chordopoxvirinae VLTF-1 family. In terms of assembly, interacts with the late transcription factors VLTF-2 and VLTF-3. Interacts with the late transcription elongation factor VLTF-4. Interacts with itself.

In terms of biological role, associates with RNA polymerase to initiate transcription from late gene promoters. The chain is Late transcription factor 1 (OPG093) from Vaccinia virus (strain Ankara) (VACV).